We begin with the raw amino-acid sequence, 675 residues long: DNA ligase (675 aa).

NAD(+) contacts are provided by residues 33–37 (DAEYD), 82–83 (SL), and glutamate 115. Lysine 117 functions as the N6-AMP-lysine intermediate in the catalytic mechanism. Positions 138, 175, 293, and 317 each coordinate NAD(+). Zn(2+)-binding residues include cysteine 411, cysteine 414, cysteine 429, and cysteine 435. The 82-residue stretch at 594 to 675 (IADNPLKDKT…LIGYFTTIVS (82 aa)) folds into the BRCT domain.

This sequence belongs to the NAD-dependent DNA ligase family. LigA subfamily. Mg(2+) serves as cofactor. Mn(2+) is required as a cofactor.

The catalysed reaction is NAD(+) + (deoxyribonucleotide)n-3'-hydroxyl + 5'-phospho-(deoxyribonucleotide)m = (deoxyribonucleotide)n+m + AMP + beta-nicotinamide D-nucleotide.. Functionally, DNA ligase that catalyzes the formation of phosphodiester linkages between 5'-phosphoryl and 3'-hydroxyl groups in double-stranded DNA using NAD as a coenzyme and as the energy source for the reaction. It is essential for DNA replication and repair of damaged DNA. This Glaesserella parasuis serovar 5 (strain SH0165) (Haemophilus parasuis) protein is DNA ligase.